The primary structure comprises 595 residues: DNA primase (595 aa).

The segment at 38-62 adopts a CHC2-type zinc-finger fold; it reads CPFHQEKTPSFTVSDSKRFFYCFGC. The 83-residue stretch at 250–332 folds into the Toprim domain; the sequence is NHSILVEGYF…EKKISFIRLP (83 aa). Mg(2+) contacts are provided by Glu-256, Asp-300, and Asp-302.

This sequence belongs to the DnaG primase family. Monomer. Interacts with DnaB. Zn(2+) is required as a cofactor. It depends on Mg(2+) as a cofactor.

It catalyses the reaction ssDNA + n NTP = ssDNA/pppN(pN)n-1 hybrid + (n-1) diphosphate.. RNA polymerase that catalyzes the synthesis of short RNA molecules used as primers for DNA polymerase during DNA replication. This is DNA primase from Rickettsia felis (strain ATCC VR-1525 / URRWXCal2) (Rickettsia azadi).